The following is a 2209-amino-acid chain: Genome polyprotein (2209 aa).

Gly2 is lipidated: N-myristoyl glycine; by host. Topologically, residues 2-1520 are cytoplasmic; sequence GAQVSSQKVG…NINRAMTILQ (1519 aa). The segment at 580–600 is amphipathic alpha-helix; the sequence is GLGQMLESMIDNTVRETVGAA. Active-site for protease 2A activity residues include His901 and Asp919. Residues Cys936 and Cys938 each contribute to the Zn(2+) site. Cys990 functions as the For protease 2A activity in the catalytic mechanism. Cys996 and His998 together coordinate Zn(2+). Residues 1128–1200 are membrane-binding; it reads GDSWLKKFTE…HQSCPSQEHQ (73 aa). An oligomerization region spans residues 1128-1266; the sequence is GDSWLKKFTE…SPGTGKSVAT (139 aa). The segment at 1149–1153 is RNA-binding; it reads SNKIS. The SF3 helicase domain occupies 1232–1388; that stretch reads EHTINNYIQF…NEYSRDGKLN (157 aa). Residue 1256-1263 participates in ATP binding; it reads GSPGTGKS. Zn(2+) is bound by residues Cys1396, Cys1399, Cys1408, and Cys1413. The C4-type zinc finger occupies 1396–1413; it reads CKNCHQPANFKRCCPLVC. The RNA-binding stretch occupies residues 1440-1447; that stretch reads ERNRRSNI. Positions 1451–1456 are oligomerization; sequence MEALFQ. An intramembrane segment occupies 1521–1536; the sequence is AVTTFAAVAGVVYVMY. The Cytoplasmic segment spans residues 1537-2209; that stretch reads KLFAGHQGAY…TLYRRWLDSF (673 aa). Tyr1546 carries the post-translational modification O-(5'-phospho-RNA)-tyrosine. Positions 1566-1744 constitute a Peptidase C3 domain; sequence GPGFDYAVAM…FAAALKRSYF (179 aa). Catalysis depends on for protease 3C activity residues His1605, Glu1636, and Cys1712. Residues 1975–2090 enclose the RdRp catalytic domain; it reads EKLFAFDYTG…SYPHEVDASL (116 aa). The Mg(2+) site is built by Asp1981 and Asp2076.

Belongs to the picornaviruses polyprotein family. In terms of assembly, interacts with capsid protein VP1 and capsid protein VP3 to form heterotrimeric protomers. As to quaternary structure, interacts with capsid protein VP0, and capsid protein VP3 to form heterotrimeric protomers. Interacts with human PVR. Five protomers subsequently associate to form pentamers which serve as building blocks for the capsid. Interacts with capsid protein VP2, capsid protein VP3 and capsid protein VP4 following cleavage of capsid protein VP0. Interacts with capsid protein VP1 and capsid protein VP3 in the mature capsid. In terms of assembly, interacts with capsid protein VP0 and capsid protein VP1 to form heterotrimeric protomers. Five protomers subsequently associate to form pentamers which serve as building blocks for the capsid. Interacts with capsid protein VP4 in the mature capsid. Interacts with protein 2C; this interaction may be important for virion morphogenesis. As to quaternary structure, interacts with capsid protein VP1 and capsid protein VP3. Homodimer. In terms of assembly, homohexamer; forms a hexameric ring structure with 6-fold symmetry characteristic of AAA+ ATPases. Interacts (via N-terminus) with host RTN3 (via reticulon domain); this interaction is important for viral replication. Interacts with capsid protein VP3; this interaction may be important for virion morphogenesis. As to quaternary structure, interacts with protein 3CD. Homodimer. Interacts with host GBF1. Interacts (via GOLD domain) with host ACBD3 (via GOLD domain); this interaction allows the formation of a viral protein 3A/ACBD3 heterotetramer with a 2:2 stoichiometry, which will stimulate the recruitment of host PI4KB in order to synthesize PI4P at the viral RNA replication sites. In terms of assembly, interacts with RNA-directed RNA polymerase. As to quaternary structure, interacts with protein 3AB and with RNA-directed RNA polymerase. Interacts with Viral protein genome-linked and with protein 3CD. Requires Mg(2+) as cofactor. Specific enzymatic cleavages in vivo by the viral proteases yield processing intermediates and the mature proteins. In terms of processing, myristoylation is required for the formation of pentamers during virus assembly. Further assembly of 12 pentamers and a molecule of genomic RNA generates the provirion. Post-translationally, during virion maturation, immature virions are rendered infectious following cleavage of VP0 into VP4 and VP2. This maturation seems to be an autocatalytic event triggered by the presence of RNA in the capsid and it is followed by a conformational change infectious virion. Myristoylation is required during RNA encapsidation and formation of the mature virus particle. In terms of processing, VPg is uridylylated by the polymerase into VPg-pUpU. This acts as a nucleotide-peptide primer for the genomic RNA replication.

Its subcellular location is the virion. It localises to the host cytoplasm. The protein resides in the host cytoplasmic vesicle membrane. The protein localises to the host nucleus. It carries out the reaction a ribonucleoside 5'-triphosphate + H2O = a ribonucleoside 5'-diphosphate + phosphate + H(+). The enzyme catalyses Selective cleavage of Tyr-|-Gly bond in the picornavirus polyprotein.. It catalyses the reaction RNA(n) + a ribonucleoside 5'-triphosphate = RNA(n+1) + diphosphate. The catalysed reaction is Selective cleavage of Gln-|-Gly bond in the poliovirus polyprotein. In other picornavirus reactions Glu may be substituted for Gln, and Ser or Thr for Gly.. With respect to regulation, replication or transcription is subject to high level of random mutations by the nucleotide analog ribavirin. Forms an icosahedral capsid of pseudo T=3 symmetry with capsid proteins VP2 and VP3. The capsid is 300 Angstroms in diameter, composed of 60 copies of each capsid protein and enclosing the viral positive strand RNA genome. Capsid protein VP1 mainly forms the vertices of the capsid. Capsid protein VP1 interacts with host cell receptor PVR to provide virion attachment to target host cells. This attachment induces virion internalization predominantly through clathrin- and caveolin-independent endocytosis in Hela cells and through caveolin-mediated endocytosis in brain microvascular endothelial cells. Tyrosine kinases are probably involved in the entry process. Virus binding to PVR induces increased junctional permeability and rearrangement of junctional proteins. Modulation of endothelial tight junctions, as well as cytolytic infection of endothelial cells themselves, may result in loss of endothelial integrity which may help the virus to reach the CNS. After binding to its receptor, the capsid undergoes conformational changes. Capsid protein VP1 N-terminus (that contains an amphipathic alpha-helix) and capsid protein VP4 are externalized. Together, they shape a pore in the host membrane through which viral genome is translocated to host cell cytoplasm. In terms of biological role, forms an icosahedral capsid of pseudo T=3 symmetry with capsid proteins VP2 and VP3. The capsid is 300 Angstroms in diameter, composed of 60 copies of each capsid protein and enclosing the viral positive strand RNA genome. Functionally, lies on the inner surface of the capsid shell. After binding to the host receptor, the capsid undergoes conformational changes. Capsid protein VP4 is released, Capsid protein VP1 N-terminus is externalized, and together, they shape a pore in the host membrane through which the viral genome is translocated into the host cell cytoplasm. Its function is as follows. Component of immature procapsids, which is cleaved into capsid proteins VP4 and VP2 after maturation. Allows the capsid to remain inactive before the maturation step. Cysteine protease that cleaves viral polyprotein and specific host proteins. It is responsible for the autocatalytic cleavage between the P1 and P2 regions, which is the first cleavage occurring in the polyprotein. Also cleaves the host translation initiation factor EIF4G1, in order to shut down the capped cellular mRNA translation. Inhibits the host nucleus-cytoplasm protein and RNA trafficking by cleaving host members of the nuclear pores including NUP98, NUP62 and NUP153. Counteracts stress granule formation probably by antagonizing its assembly or promoting its dissassembly. Cleaves and inhibits host IFIH1/MDA5, thereby inhibiting the type-I IFN production and the establishment of the antiviral state. Cleaves and inhibits host MAVS, thereby inhibiting the type-I IFN production and the establishment of the antiviral state. In terms of biological role, plays an essential role in the virus replication cycle by acting as a viroporin. Creates a pore in the host endoplasmic reticulum and as a consequence releases Ca2+ in the cytoplasm of infected cell. In turn, high levels of cytoplasmic calcium may trigger membrane trafficking and transport of viral ER-associated proteins to viroplasms, sites of viral genome replication. Functionally, induces and associates with structural rearrangements of intracellular membranes. Displays RNA-binding, nucleotide binding and NTPase activities. May play a role in virion morphogenesis and viral RNA encapsidation by interacting with the capsid protein VP3. Its function is as follows. Localizes the viral replication complex to the surface of membranous vesicles. Together with protein 3CD binds the Cis-Active RNA Element (CRE) which is involved in RNA synthesis initiation. Acts as a cofactor to stimulate the activity of 3D polymerase, maybe through a nucleid acid chaperone activity. Localizes the viral replication complex to the surface of membranous vesicles. It inhibits host cell endoplasmic reticulum-to-Golgi apparatus transport and causes the disassembly of the Golgi complex, possibly through GBF1 interaction. This would result in depletion of MHC, trail receptors and IFN receptors at the host cell surface. Plays an essential role in viral RNA replication by recruiting ACBD3 and PI4KB at the viral replication sites, thereby allowing the formation of the rearranged membranous structures where viral replication takes place. In terms of biological role, acts as a primer for viral RNA replication and remains covalently bound to viral genomic RNA. VPg is uridylylated prior to priming replication into VPg-pUpU. The oriI viral genomic sequence may act as a template for this. The VPg-pUpU is then used as primer on the genomic RNA poly(A) by the RNA-dependent RNA polymerase to replicate the viral genome. During genome replication, the VPg-RNA linkage is removed by the host TDP2, thereby accelerating replication. During the late stage of the replication cycle, host TDP2 is excluded from sites of viral RNA synthesis and encapsidation, allowing for the generation of progeny virions. Functionally, involved in the viral replication complex and viral polypeptide maturation. It exhibits protease activity with a specificity and catalytic efficiency that is different from protease 3C. Protein 3CD lacks polymerase activity. Protein 3CD binds to the 5'UTR of the viral genome. Its function is as follows. Major viral protease that mediates proteolytic processing of the polyprotein. Cleaves host EIF5B, contributing to host translation shutoff. Also cleaves host PABPC1, contributing to host translation shutoff. Cleaves host RIGI and thus contributes to the inhibition of type I interferon production. Cleaves host NLRP1, triggers host N-glycine-mediated degradation of the autoinhibitory NLRP1 N-terminal fragment. Inhibits the integrated stress response (ISR) in the infected cell by cleaving host G3BP1. Stress granule formation is thus inhibited, which allows protein synthesis and viral replication. Replicates the viral genomic RNA on the surface of intracellular membranes. May form linear arrays of subunits that propagate along a strong head-to-tail interaction called interface-I. Covalently attaches UMP to a tyrosine of VPg, which is used to prime RNA synthesis. The positive stranded RNA genome is first replicated at virus induced membranous vesicles, creating a dsRNA genomic replication form. This dsRNA is then used as template to synthesize positive stranded RNA genomes. ss(+)RNA genomes are either translated, replicated or encapsidated. The protein is Genome polyprotein of Homo sapiens (Human).